The sequence spans 272 residues: NH(3)-dependent NAD(+) synthetase (272 aa).

43 to 50 (GLSGGQDS) provides a ligand contact to ATP. Residue aspartate 49 coordinates Mg(2+). Arginine 138 is a binding site for deamido-NAD(+). An ATP-binding site is contributed by threonine 158. Glutamate 163 is a Mg(2+) binding site. 2 residues coordinate deamido-NAD(+): lysine 171 and aspartate 178. 2 residues coordinate ATP: lysine 187 and threonine 209. 258-259 (HK) lines the deamido-NAD(+) pocket.

The protein belongs to the NAD synthetase family. As to quaternary structure, homodimer.

The catalysed reaction is deamido-NAD(+) + NH4(+) + ATP = AMP + diphosphate + NAD(+) + H(+). The protein operates within cofactor biosynthesis; NAD(+) biosynthesis; NAD(+) from deamido-NAD(+) (ammonia route): step 1/1. In terms of biological role, catalyzes the ATP-dependent amidation of deamido-NAD to form NAD. Uses ammonia as a nitrogen source. This chain is NH(3)-dependent NAD(+) synthetase, found in Halalkalibacterium halodurans (strain ATCC BAA-125 / DSM 18197 / FERM 7344 / JCM 9153 / C-125) (Bacillus halodurans).